A 656-amino-acid chain; its full sequence is Pentatricopeptide repeat-containing protein At1g62260, mitochondrial (656 aa).

PPR repeat units follow at residues 70 to 104 (NTVT…DVVT), 105 to 134 (WNTM…MPSR), 135 to 169 (DSFS…NAVS), 170 to 200 (WSAM…DSSP), 203 to 227 (ALVA…YGSL), 234 to 264 (LVYA…IPDL), 280 to 310 (NVVS…MKDR), 311 to 345 (DTIS…DAHS), 346 to 372 (WNMM…TPEK), 373 to 407 (HTVS…GEKP), 408 to 438 (DPHT…VVKT), 442 to 472 (DVPV…MKLK), 474 to 508 (EVIT…GIYP), 509 to 544 (SHIT…KIEP), and 545 to 575 (QMEH…MPFE). The interval 580 to 655 (VWGALLDACR…ERGSSWVDSS (76 aa)) is type E motif.

Belongs to the PPR family. PCMP-E subfamily.

Its subcellular location is the mitochondrion. This Arabidopsis thaliana (Mouse-ear cress) protein is Pentatricopeptide repeat-containing protein At1g62260, mitochondrial (PCMP-E10).